The chain runs to 131 residues: Small ribosomal subunit protein uS8 (131 aa).

The protein belongs to the universal ribosomal protein uS8 family. Part of the 30S ribosomal subunit. Contacts proteins S5 and S12.

Functionally, one of the primary rRNA binding proteins, it binds directly to 16S rRNA central domain where it helps coordinate assembly of the platform of the 30S subunit. The protein is Small ribosomal subunit protein uS8 of Bordetella avium (strain 197N).